An 80-amino-acid chain; its full sequence is Exodeoxyribonuclease 7 small subunit (80 aa).

It belongs to the XseB family. Heterooligomer composed of large and small subunits.

It localises to the cytoplasm. The catalysed reaction is Exonucleolytic cleavage in either 5'- to 3'- or 3'- to 5'-direction to yield nucleoside 5'-phosphates.. In terms of biological role, bidirectionally degrades single-stranded DNA into large acid-insoluble oligonucleotides, which are then degraded further into small acid-soluble oligonucleotides. The polypeptide is Exodeoxyribonuclease 7 small subunit (Salmonella paratyphi B (strain ATCC BAA-1250 / SPB7)).